The sequence spans 517 residues: General transcription factor IIF subunit 1 (517 aa).

Residue alanine 2 is modified to N-acetylalanine. Threonine 156 bears the Phosphothreonine mark. Residues 178–466 (QQRRLKDQDQ…DAVRRYLTRK (289 aa)) are disordered. A phosphoserine mark is found at serine 217, serine 218, serine 221, and serine 224. Basic residues predominate over residues 232–251 (PKAKKKAPLAKGGRKKKKKK). Composition is skewed to acidic residues over residues 255-270 (DEAF…EGQE) and 303-325 (EQSD…EEEE). Position 331 is a phosphothreonine (threonine 331). Over residues 343–355 (EESDSSEESDIDS) the composition is skewed to acidic residues. The span at 364–374 (AKKKTPPKRER) shows a compositional bias: basic residues. Phosphoserine is present on residues serine 377, serine 380, serine 381, and serine 385. The span at 377-391 (SGGSSRGNSRPGTPS) shows a compositional bias: low complexity. A Phosphothreonine modification is found at threonine 389. Serine 391 bears the Phosphoserine mark. Residue lysine 407 is modified to N6-acetyllysine. A compositionally biased stretch (polar residues) spans 428–452 (GPQSLSGKSTPQPPSGKTTPNSGDV). Serine 431, serine 433, and serine 436 each carry phosphoserine. 2 positions are modified to phosphothreonine: threonine 437 and threonine 446. Position 449 is a phosphoserine (serine 449). Glutamate 503, histidine 512, and glutamate 517 together coordinate Zn(2+).

The protein belongs to the TFIIF alpha subunit family. In terms of assembly, heterodimer of an alpha and a beta subunit. Interacts with GTF2F2, CTDP1, TAF6/TAFII80 and URI1. Interacts with GTF2B (via C-terminus and preferentially via acetylated form); this interaction prevents binding of GTF2B to GTF2F2. Part of TBP-based Pol II pre-initiation complex (PIC), in which Pol II core assembles with general transcription factors and other specific initiation factors including GTF2E1, GTF2E2, GTF2F1, GTF2F2, TCEA1, ERCC2, ERCC3, GTF2H2, GTF2H3, GTF2H4, GTF2H5, GTF2A1, GTF2A2, GTF2B and TBP; this large multi-subunit PIC complex mediates DNA unwinding and targets Pol II core to the transcription start site where the first phosphodiester bond forms. Phosphorylated on Ser and other residues by TAF1 and casein kinase II-like kinases.

It localises to the nucleus. Its function is as follows. TFIIF is a general transcription initiation factor that binds to RNA polymerase II and helps to recruit it to the initiation complex in collaboration with TFIIB. It promotes transcription elongation. The sequence is that of General transcription factor IIF subunit 1 (GTF2F1) from Homo sapiens (Human).